Reading from the N-terminus, the 262-residue chain is Ribose-5-phosphate isomerase A (262 aa).

Substrate-binding positions include 33 to 36 (TGST), 89 to 92 (DGAD), and 102 to 105 (KGGG). The Proton acceptor role is filled by Glu111. Lys129 lines the substrate pocket.

Belongs to the ribose 5-phosphate isomerase family. Homodimer.

The catalysed reaction is aldehydo-D-ribose 5-phosphate = D-ribulose 5-phosphate. It participates in carbohydrate degradation; pentose phosphate pathway; D-ribose 5-phosphate from D-ribulose 5-phosphate (non-oxidative stage): step 1/1. Its function is as follows. Catalyzes the reversible conversion of ribose-5-phosphate to ribulose 5-phosphate. The chain is Ribose-5-phosphate isomerase A from Cereibacter sphaeroides (strain KD131 / KCTC 12085) (Rhodobacter sphaeroides).